The chain runs to 346 residues: RNA-directed DNA methylation 4 (346 aa).

At Met1 the chain carries N-acetylmethionine. Composition is skewed to acidic residues over residues 253–268 (FCDG…EDSN), 278–312 (PEEE…DDEE), and 323–332 (GDDEFDDYAE). Positions 253–346 (FCDGSDESDY…YSESDEEFES (94 aa)) are disordered.

The protein belongs to the IWR1/SLC7A6OS family. As to quaternary structure, interacts with NRPD1. Associates with Pol II and Pol V complexes.

Functionally, probable regulatory factor for several RNA polymerases. Effector involved in facilitation of Pol V transcription as RNA scaffold and recruitment of silencing complex to target genomic sites. In Arabidopsis thaliana (Mouse-ear cress), this protein is RNA-directed DNA methylation 4 (RDM4).